A 66-amino-acid chain; its full sequence is Large ribosomal subunit protein uL29 (66 aa).

It belongs to the universal ribosomal protein uL29 family. As to quaternary structure, part of the 50S ribosomal subunit.

This is Large ribosomal subunit protein uL29 from Thermococcus kodakarensis (strain ATCC BAA-918 / JCM 12380 / KOD1) (Pyrococcus kodakaraensis (strain KOD1)).